A 366-amino-acid chain; its full sequence is Pectinesterase A (366 aa).

A signal peptide spans 1–24 (MLKTISGTLALSLIIAASVHQAQA). Substrate-binding residues include Thr-109 and Gln-153. The active-site Proton donor is the Asp-178. Cys-192 and Cys-212 are joined by a disulfide. Catalysis depends on Asp-199, which acts as the Nucleophile. Positions 219, 226, 230, 267, 269, and 272 each coordinate substrate.

Belongs to the pectinesterase family. As to quaternary structure, monomer.

The protein localises to the secreted. The enzyme catalyses [(1-&gt;4)-alpha-D-galacturonosyl methyl ester](n) + n H2O = [(1-&gt;4)-alpha-D-galacturonosyl](n) + n methanol + n H(+). Its pathway is glycan metabolism; pectin degradation; 2-dehydro-3-deoxy-D-gluconate from pectin: step 1/5. Catalyzes the first step in maceration and soft-rotting of plant tissue. This is Pectinesterase A from Dickeya dadantii (strain 3937) (Erwinia chrysanthemi (strain 3937)).